The chain runs to 208 residues: MVDVRTQTLLAQLRQQGIRDERLLQAMEAVPREHFIDEAFEHKAYDNTALPIGLGQTISQPYIVARMTELLALWPESRVLEIGTGSGYQTAILAHLVKHVCSVERIKKLQWQAKRRLKLLDLHNISTRHGDGWQGWLSRGPFDAIIVTAAPPEIPQALMAQLDEGGVMVLPVGDEQQHLTRVRRKGGEFVVDTVEAVRFVPLVKGELA.

The active site involves serine 59.

It belongs to the methyltransferase superfamily. L-isoaspartyl/D-aspartyl protein methyltransferase family.

Its subcellular location is the cytoplasm. It carries out the reaction [protein]-L-isoaspartate + S-adenosyl-L-methionine = [protein]-L-isoaspartate alpha-methyl ester + S-adenosyl-L-homocysteine. Catalyzes the methyl esterification of L-isoaspartyl residues in peptides and proteins that result from spontaneous decomposition of normal L-aspartyl and L-asparaginyl residues. It plays a role in the repair and/or degradation of damaged proteins. The protein is Protein-L-isoaspartate O-methyltransferase of Sodalis glossinidius (strain morsitans).